Here is a 196-residue protein sequence, read N- to C-terminus: MSSLLYIFLLLAVFISHRGVTTEAAVEPVKDINGKSLLTGVNYYILPVIRGRGGGLTMSNLKTETCPTSVIQDQFEVSQGLPVKFSPYDKSRTIPVSTDVNIKFSPTSIWELANFDETTKQWFISTCGVEGNPGQKTVDNWFKIDKFEKDYKIRFCPTVCNFCKVICRDVGVFVQDGKRRLALSDVPLKVMFKRAY.

Positions 1 to 19 (MSSLLYIFLLLAVFISHRG) are cleaved as a signal peptide. Cys156 and Cys167 are oxidised to a cystine.

This sequence belongs to the protease inhibitor I3 (leguminous Kunitz-type inhibitor) family.

It is found in the endoplasmic reticulum. Can inhibit both serine proteases and cysteine proteases. May be involved in the modulation of the proteases that participate in the hydrolysis of dietary proteins in the gut of spider mites. This chain is Kunitz trypsin inhibitor 5, found in Arabidopsis thaliana (Mouse-ear cress).